A 291-amino-acid chain; its full sequence is Lys-63-specific deubiquitinase BRCC36 (291 aa).

Ala-2 carries the N-acetylalanine modification. The MPN domain occupies 12–179 (VHLESDAFLV…YTCFQSVQAQ (168 aa)). The Zn(2+) site is built by His-122, His-124, and Asp-135. Positions 122–135 (HSHPHITVWPSHVD) match the JAMM motif motif. A Phosphoserine modification is found at Ser-233.

Belongs to the peptidase M67A family. BRCC36 subfamily. Component of the ARISC complex, at least composed of UIMC1/RAP80, ABRAXAS1, BRCC3/BRCC36, BABAM2 and BABAM1/NBA1. Component of the BRCA1-A complex, at least composed of BRCA1, BARD1, UIMC1/RAP80, ABRAXAS1, BRCC3/BRCC36, BABAM2 and BABAM1/NBA1. In the BRCA1-A complex, interacts directly with ABRAXAS1 and BABAM2. Component of the BRISC complex, at least composed of ABRAXAS2, BRCC3/BRCC36, BABAM2 and BABAM1/NBA1. Identified in a complex with SHMT2 and the other subunits of the BRISC complex. In the BRISC complex, interacts directly with ABRAXAS2. Identified in a complex with ABRAXAS2 and NUMA1. The BRISC complex interacts with the CSN complex. Component of the BRCA1/BRCA2 containing complex (BRCC), which also contains BRCA1, BRCA2, BARD1, BABAM2 and RAD51. BRCC is a ubiquitin E3 ligase complex that enhances cellular survival following DNA damage. Interacts with BRCA1. Binds polyubiquitin. Interacts with PWWP2B. Interacts with HDAC1; this interaction is enhanced in the presence of PWWP2B. Zn(2+) serves as cofactor.

It is found in the nucleus. Its subcellular location is the cytoplasm. The protein localises to the cytoskeleton. It localises to the spindle pole. Metalloprotease that specifically cleaves 'Lys-63'-linked polyubiquitin chains. Does not have activity toward 'Lys-48'-linked polyubiquitin chains. Component of the BRCA1-A complex, a complex that specifically recognizes 'Lys-63'-linked ubiquitinated histones H2A and H2AX at DNA lesions sites, leading to target the BRCA1-BARD1 heterodimer to sites of DNA damage at double-strand breaks (DSBs). In the BRCA1-A complex, it specifically removes 'Lys-63'-linked ubiquitin on histones H2A and H2AX, antagonizing the RNF8-dependent ubiquitination at double-strand breaks (DSBs). Catalytic subunit of the BRISC complex, a multiprotein complex that specifically cleaves 'Lys-63'-linked ubiquitin in various substrates. Mediates the specific 'Lys-63'-specific deubiquitination associated with the COP9 signalosome complex (CSN), via the interaction of the BRISC complex with the CSN complex. The BRISC complex is required for normal mitotic spindle assembly and microtubule attachment to kinetochores via its role in deubiquitinating NUMA1. Plays a role in interferon signaling via its role in the deubiquitination of the interferon receptor IFNAR1; deubiquitination increases IFNAR1 activity by enhancing its stability and cell surface expression. Acts as a regulator of the NLRP3 inflammasome by mediating deubiquitination of NLRP3, leading to NLRP3 inflammasome assembly. Down-regulates the response to bacterial lipopolysaccharide (LPS) via its role in IFNAR1 deubiquitination. Deubiquitinates HDAC1 and PWWP2B leading to their stabilization. The protein is Lys-63-specific deubiquitinase BRCC36 (Brcc3) of Rattus norvegicus (Rat).